Reading from the N-terminus, the 567-residue chain is 2-succinyl-5-enolpyruvyl-6-hydroxy-3-cyclohexene-1-carboxylate synthase (567 aa).

Belongs to the TPP enzyme family. MenD subfamily. As to quaternary structure, homodimer. Requires Mg(2+) as cofactor. The cofactor is Mn(2+). Thiamine diphosphate is required as a cofactor.

The catalysed reaction is isochorismate + 2-oxoglutarate + H(+) = 5-enolpyruvoyl-6-hydroxy-2-succinyl-cyclohex-3-ene-1-carboxylate + CO2. Its pathway is quinol/quinone metabolism; 1,4-dihydroxy-2-naphthoate biosynthesis; 1,4-dihydroxy-2-naphthoate from chorismate: step 2/7. It participates in quinol/quinone metabolism; menaquinone biosynthesis. In terms of biological role, catalyzes the thiamine diphosphate-dependent decarboxylation of 2-oxoglutarate and the subsequent addition of the resulting succinic semialdehyde-thiamine pyrophosphate anion to isochorismate to yield 2-succinyl-5-enolpyruvyl-6-hydroxy-3-cyclohexene-1-carboxylate (SEPHCHC). This chain is 2-succinyl-5-enolpyruvyl-6-hydroxy-3-cyclohexene-1-carboxylate synthase, found in Yersinia pseudotuberculosis serotype O:1b (strain IP 31758).